Here is a 350-residue protein sequence, read N- to C-terminus: Probable arabinogalactan endo-beta-1,4-galactanase A (350 aa).

The signal sequence occupies residues 1–16 (MIYSLLLSALPLLSSA). N-linked (GlcNAc...) asparagine glycosylation occurs at Asn128. Glu152 acts as the Proton donor in catalysis. Glu262 acts as the Nucleophile in catalysis.

It belongs to the glycosyl hydrolase 53 family.

It localises to the secreted. The enzyme catalyses The enzyme specifically hydrolyzes (1-&gt;4)-beta-D-galactosidic linkages in type I arabinogalactans.. Endogalactanase involved in the degradation of plant cell wall polysaccharides, and more particularly of hairy regions of pectin. This Aspergillus niger (strain ATCC MYA-4892 / CBS 513.88 / FGSC A1513) protein is Probable arabinogalactan endo-beta-1,4-galactanase A (galA).